The primary structure comprises 221 residues: Vesicle transport v-SNARE 11 (221 aa).

An N-acetylserine modification is found at Ser-2. The Cytoplasmic portion of the chain corresponds to 2-198; the sequence is SDVFDGYERQ…MTRRMNKNKW (197 aa). Residues 32-93 adopt a coiled-coil conformation; sequence EQKKQKLSEI…FKTEVKRITS (62 aa). A helical; Anchor for type IV membrane protein membrane pass occupies residues 199-219; sequence TIGAIIIALIAAIFIILYFKL. Topologically, residues 220 to 221 are vesicular; sequence TK.

This sequence belongs to the VTI1 family. Forms SNARE complexes with the t-SNAREs SYP51 and either SYP21 or SYP22 in the PVC, and with a much lower affinity with SYP61 in the TGN. Does not interact with SYP41, SYP42 or VPS45. Binds to EPSIN1. Interacts with SCYL2B. Expressed in roots, stems, flowers and leaves.

It is found in the golgi apparatus. The protein localises to the trans-Golgi network membrane. Its subcellular location is the prevacuolar compartment membrane. It localises to the vacuole membrane. Functionally, functions as a v-SNARE responsible for targeting AtELP-containing vesicles from the trans-Golgi network (TGN) to the prevacuolar compartment (PVC) and mediates liposome fusion. May be also involved in retrograde traffic to the cis-Golgi. Promotes the formation of vacuolar membrane 'bulbs'. Necessary to deliver proteins to the lytic vacuole, but seems not involved in storage proteins transport. Required for amyloplast sedimentation in the endodermis during shoot gravitropism, which are thus acting as statoliths. Expression in the endodermis is essential for the shoot gravitropic response, whereas expression in other tissues may be responsible for the correct stem and leaf shape. This Arabidopsis thaliana (Mouse-ear cress) protein is Vesicle transport v-SNARE 11.